A 235-amino-acid polypeptide reads, in one-letter code: Pyridoxine/pyridoxamine 5'-phosphate oxidase (235 aa).

Substrate-binding positions include 30 to 33 (RQEY) and Lys88. FMN contacts are provided by residues 83-88 (RTVLLK), 98-99 (YT), Arg104, Lys105, and Gln127. Substrate is bound by residues Tyr145, Arg149, and Ser153. Residues 162-163 (QS) and Trp207 contribute to the FMN site. 213–215 (RLH) is a substrate binding site. Arg217 serves as a coordination point for FMN.

Belongs to the pyridoxamine 5'-phosphate oxidase family. Homodimer. FMN is required as a cofactor.

The catalysed reaction is pyridoxamine 5'-phosphate + O2 + H2O = pyridoxal 5'-phosphate + H2O2 + NH4(+). The enzyme catalyses pyridoxine 5'-phosphate + O2 = pyridoxal 5'-phosphate + H2O2. It participates in cofactor metabolism; pyridoxal 5'-phosphate salvage; pyridoxal 5'-phosphate from pyridoxamine 5'-phosphate: step 1/1. The protein operates within cofactor metabolism; pyridoxal 5'-phosphate salvage; pyridoxal 5'-phosphate from pyridoxine 5'-phosphate: step 1/1. Catalyzes the oxidation of either pyridoxine 5'-phosphate (PNP) or pyridoxamine 5'-phosphate (PMP) into pyridoxal 5'-phosphate (PLP). The protein is Pyridoxine/pyridoxamine 5'-phosphate oxidase of Bacteroides fragilis (strain YCH46).